The primary structure comprises 410 residues: Multifunctional CCA protein (410 aa).

ATP is bound by residues Gly8 and Arg11. CTP is bound by residues Gly8 and Arg11. Residues Asp21 and Asp23 each contribute to the Mg(2+) site. Positions 91, 137, and 140 each coordinate ATP. CTP-binding residues include Arg91, Arg137, and Arg140. One can recognise an HD domain in the interval Ser225–Phe326.

Belongs to the tRNA nucleotidyltransferase/poly(A) polymerase family. Bacterial CCA-adding enzyme type 1 subfamily. In terms of assembly, monomer. Can also form homodimers and oligomers. Requires Mg(2+) as cofactor. Ni(2+) is required as a cofactor.

The enzyme catalyses a tRNA precursor + 2 CTP + ATP = a tRNA with a 3' CCA end + 3 diphosphate. It carries out the reaction a tRNA with a 3' CCA end + 2 CTP + ATP = a tRNA with a 3' CCACCA end + 3 diphosphate. Catalyzes the addition and repair of the essential 3'-terminal CCA sequence in tRNAs without using a nucleic acid template. Adds these three nucleotides in the order of C, C, and A to the tRNA nucleotide-73, using CTP and ATP as substrates and producing inorganic pyrophosphate. tRNA 3'-terminal CCA addition is required both for tRNA processing and repair. Also involved in tRNA surveillance by mediating tandem CCA addition to generate a CCACCA at the 3' terminus of unstable tRNAs. While stable tRNAs receive only 3'-terminal CCA, unstable tRNAs are marked with CCACCA and rapidly degraded. This chain is Multifunctional CCA protein, found in Neisseria gonorrhoeae (strain ATCC 700825 / FA 1090).